The chain runs to 79 residues: Small ribosomal subunit protein uS17 (79 aa).

Belongs to the universal ribosomal protein uS17 family. In terms of assembly, part of the 30S ribosomal subunit.

In terms of biological role, one of the primary rRNA binding proteins, it binds specifically to the 5'-end of 16S ribosomal RNA. This is Small ribosomal subunit protein uS17 from Orientia tsutsugamushi (strain Boryong) (Rickettsia tsutsugamushi).